A 227-amino-acid chain; its full sequence is Leucyl/phenylalanyl-tRNA--protein transferase (227 aa).

Belongs to the L/F-transferase family.

The protein localises to the cytoplasm. It carries out the reaction N-terminal L-lysyl-[protein] + L-leucyl-tRNA(Leu) = N-terminal L-leucyl-L-lysyl-[protein] + tRNA(Leu) + H(+). The catalysed reaction is N-terminal L-arginyl-[protein] + L-leucyl-tRNA(Leu) = N-terminal L-leucyl-L-arginyl-[protein] + tRNA(Leu) + H(+). It catalyses the reaction L-phenylalanyl-tRNA(Phe) + an N-terminal L-alpha-aminoacyl-[protein] = an N-terminal L-phenylalanyl-L-alpha-aminoacyl-[protein] + tRNA(Phe). Its function is as follows. Functions in the N-end rule pathway of protein degradation where it conjugates Leu, Phe and, less efficiently, Met from aminoacyl-tRNAs to the N-termini of proteins containing an N-terminal arginine or lysine. The chain is Leucyl/phenylalanyl-tRNA--protein transferase from Afipia carboxidovorans (strain ATCC 49405 / DSM 1227 / KCTC 32145 / OM5) (Oligotropha carboxidovorans).